Consider the following 870-residue polypeptide: MGNRGMEELIPLVNKLQDAFSSIGQSCHLDLPQIAVVGGQSAGKSSVLENFVGRDFLPRGSGIVTRRPLILQLIFSKTEYAEFLHCKSKKFTDFDEVRQEIEAETDRVTGTNKGISPVPINLRVYSPHVLNLTLIDLPGITKVPVGDQPPDIEYQIKDMILQFISRESSLILAVTPANMDLANSDALKLAKEVDPQGLRTIGVITKLDLMDEGTDARDVLENKLLPLRRGYIGVVNRSQKDIEGRKDIRAALAAERKFFLSHPAYRHMADRMGTPHLQKTLNQQLTNHIRESLPTLRSKLQSQLLSLEKEVEEYKNFRPDDPTRKTKALLQMVQQFGVDFEKRIEGSGDQVDTLELSGGARINRIFHERFPFELVKMEFDEKDLRREISYAIKNIHGVRTGLFTPDLAFEAIVKKQVVKLKEPCLKCVDLVIQELISTVRQCTSKLSSYPRLREETERIVTTYIREREGRTKDQILLLIDIEQSYINTNHEDFIGFANAQQRSTQLNKKRAIPNQGEILVIRRGWLTINNISLMKGGSKEYWFVLTAESLSWYKDEEEKEKKYMLPLDNLKIRDVEKGFMSNKHVFAIFNTEQRNVYKDLRQIELACDSQEDVDSWKASFLRAGVYPEKDQAENEDGAQENTFSMDPQLERQVETIRNLVDSYVAIINKSIRDLMPKTIMHLMINNTKAFIHHELLAYLYSSADQSSLMEESAEQAQRRDDMLRMYHALKEALNIIGDISTSTVSTPVPPPVDDTWLQNTSSHSPTPQRRPVSSVHPPGRPPAVRGPTPGPPLIPMPVGATSSFSAPPIPSRPGPQNVFANNDPFSAPPQIPSRPARIPPGIPPGVPSRRAPAAPSRPTIIRPAEPSLLD.

A Dynamin-type G domain is found at 28–294; the sequence is HLDLPQIAVV…LTNHIRESLP (267 aa). The interval 38 to 45 is G1 motif; sequence GGQSAGKS. 7 residues coordinate GDP: S41, G43, K44, S45, S46, R59, and G60. The tract at residues 64-66 is G2 motif; that stretch reads VTR. Residues 136–139 are G3 motif; the sequence is DLPG. The tract at residues 205–208 is G4 motif; the sequence is TKLD. The GDP site is built by K206, D208, and D211. A Phosphotyrosine modification is found at Y231. The interval 235–238 is G5 motif; it reads VNRS. Residues N236, R237, and Q239 each contribute to the GDP site. At K299 the chain carries N6-acetyllysine. A PH domain is found at 519–625; the sequence is LVIRRGWLTI…WKASFLRAGV (107 aa). Y597 is modified (phosphotyrosine). K598 carries the post-translational modification N6-acetyllysine. The region spanning 653–744 is the GED domain; it reads VETIRNLVDS…IIGDISTSTV (92 aa). Positions 741–870 are disordered; sequence TSTVSTPVPP…IRPAEPSLLD (130 aa). A Phosphothreonine modification is found at T755. The span at 756-767 shows a compositional bias: polar residues; that stretch reads WLQNTSSHSPTP. S764 carries the phosphoserine; by CDK1 modification. The segment covering 826–846 has biased composition (pro residues); sequence SAPPQIPSRPARIPPGIPPGV. The segment covering 847–864 has biased composition (low complexity); that stretch reads PSRRAPAAPSRPTIIRPA.

The protein belongs to the TRAFAC class dynamin-like GTPase superfamily. Dynamin/Fzo/YdjA family. In terms of assembly, oligomerizes into a helical polymer that self-assembles around the vesicle membrane, when associated to the menbrane through lipid binding. Interacts with SHANK1 and SHANK2. Interacts with SNX9. Interacts (via C-terminal proline-rich domain (PRD)) with SNX18 (via SH3 domain); this interaction regulates ATG9A and ATG16L1 trafficking from recycling endosomes to sites of autophagosome formation. Interacts with SNX33 (via SH3 domain). Interacts with PSTPIP1 (via SH3 domain). Interacts with CTNND2. Interacts (via C-terminal proline-rich domain (PRD)) with BIN1 (via SH3 domain); this interaction allows the recruitment of DNM2 to the membrane tubules and inhibits self-assembly-stimulated GTPase activity on the membrane. Interacts with GABARAP, GABARAPL1 and GABARAPL2. Interacts with MAP1LC3B (the lipidate and non-lipidated LC3 form); this interaction mediates recycling endosome scission leading to autophagosome release. Interacts with ITSN1. Interacts with MYOF. May interact with PIK3C3. May be a component of a complex composed of RAB5A (in GDP-bound form), DYN2 and PIK3C3. Interacts with SDC4; this interaction is markedly enhanced at focal ahesion site upon induction of focal adhesions and stress-fiber formation. Interacts with ACTN1. Interacts with CTTN; this interaction stimulates the intrinsic GTPase activity of DNM2 and stabilizes the association of DNM2 and actin filaments; in addition this interaction is stimulated by ligand binding to the receptor, leading to the recruitment of the DNM2-CTTN complex to the sequestered receptor-ligand complex to its internalization. Interacts with NOSTRIN (via SH3 domain); this interaction allows the recruitment of NOS3 to dynamin-positive structures. Interacts (via C-terminal proline-rich domain (PRD)) with SH3BP4 (via SH3 domain); this interaction controls the GTPase activity and is prevented by EGFR-induced tyrosine phosphorylation of either DNM2 or SH3BP4. Interacts with MYO1E (via SH3 domain). Interacts with TUBG1; this interaction may participate in centrosome cohesion. Phosphorylation at Ser-848 by GSK3-alpha relieves the inhibition of BIN1 and promotes endocytosis. Phosphorylation at Ser-764 by CDK1 is greatly increased upon mitotic entry. It regulates cytokinesis downstream of calcineurin, and does not affect clathrin-mediated endocytosis. Dephosphorylated by calcineurin/PP2 during cytokinesis in a Ca(2+)- and calmodulin-dependent manner. Phosphorylated on tyrosine residues by EGFR. Phosphorylated on tyrosine residues after activation of SRC. Ubiquitously expressed. Brain expression is restricted to glial cells and fibroblasts. Highest levels in the testis.

Its subcellular location is the cytoplasm. The protein resides in the cytoskeleton. It localises to the cytoplasmic vesicle. The protein localises to the clathrin-coated vesicle. It is found in the cell projection. Its subcellular location is the uropodium. The protein resides in the endosome. It localises to the microtubule organizing center. The protein localises to the centrosome. It is found in the centriole. Its subcellular location is the recycling endosome. The protein resides in the phagocytic cup. It localises to the phagosome membrane. The protein localises to the podosome. It is found in the cell junction. Its subcellular location is the postsynaptic density. The protein resides in the synapse. It localises to the synaptosome. The protein localises to the midbody. It is found in the membrane. Its subcellular location is the clathrin-coated pit. The protein resides in the cell membrane. The catalysed reaction is GTP + H2O = GDP + phosphate + H(+). Its function is as follows. Catalyzes the hydrolysis of GTP and utilizes this energy to mediate vesicle scission at plasma membrane during endocytosis and filament remodeling at many actin structures during organization of the actin cytoskeleton. Plays an important role in vesicular trafficking processes, namely clathrin-mediated endocytosis (CME), exocytic and clathrin-coated vesicle from the trans-Golgi network, and PDGF stimulated macropinocytosis. During vesicular trafficking process, associates to the membrane, through lipid binding, and self-assembles into ring-like structure through oligomerization to form a helical polymer around the vesicle membrane and leading to vesicle scission. Plays a role in organization of the actin cytoskeleton by mediating arrangement of stress fibers and actin bundles in podocytes. During organization of the actin cytoskeleton, self-assembles into ring-like structure that directly bundles actin filaments to form typical membrane tubules decorated with dynamin spiral polymers. Self-assembly increases GTPase activity and the GTP hydrolysis causes the rapid depolymerization of dynamin spiral polymers, and results in dispersion of actin bundles. Remodels, through its interaction with CTTN, bundled actin filaments in a GTPase-dependent manner and plays a role in orchestrating the global actomyosin cytoskeleton. The interaction with CTTN stabilizes the interaction of DNM2 and actin filaments and stimulates the intrinsic GTPase activity that results in actin filament-barbed ends and increases the sensitivity of filaments in bundles to the actin depolymerizing factor, CFL1. Plays a role in the autophagy process, by participating in the formation of ATG9A vesicles destined for the autophagosomes through its interaction with SNX18, by mediating recycling endosome scission leading to autophagosome release through MAP1LC3B interaction and by regulating maturation of apoptotic cell corpse-containing phagosomes by recruiting PIK3C3 to the phagosome membrane. Also plays a role in cytokinesis. May participate in centrosome cohesion through its interaction with TUBG1. Plays a role in the regulation of neuron morphology, axon growth and formation of neuronal growth cones. Involved in membrane tubulation. This chain is Dynamin-2, found in Rattus norvegicus (Rat).